The sequence spans 226 residues: Gap junction beta-2 protein (226 aa).

The stretch at 2–13 is an intramembrane region; that stretch reads DWGALQTILGGV. The Cytoplasmic segment spans residues 14–20; sequence NKHSTSI. Residues 21 to 40 form a helical membrane-spanning segment; that stretch reads GKIWLTVLFIFRIMILVVAA. Over 41-73 the chain is Extracellular; it reads KEVWGDEQADFVCNTLQPGCKNVCYDHYFPISH. Ca(2+) is bound by residues E42, G45, and E47. 3 disulfide bridges follow: C53–C180, C60–C174, and C64–C169. A helical transmembrane segment spans residues 74–94; that stretch reads IRLWALQLIFVSTPALLVAMH. The Cytoplasmic segment spans residues 95–135; the sequence is VAYRRHEKKRKFIKGEIKSEFKDIEEIKTQKVRIEGSLWWT. The helical transmembrane segment at 136-156 threads the bilayer; sequence YTSSIFFRVIFEAAFMYVFYV. Residues 157–189 are Extracellular-facing; it reads MYDGFSMQRLVKCNAWPCPNTVDCFVSRPTEKT. The helical transmembrane segment at 190 to 210 threads the bilayer; sequence VFTVFMIAVSGICILLNVTEL. The Cytoplasmic portion of the chain corresponds to 211–226; the sequence is CYLLIRYCSGRSKKPV.

The protein belongs to the connexin family. Beta-type (group I) subfamily. A hemichannel or connexon is composed of a hexamer of connexins. A functional gap junction is formed by the apposition of two hemichannels. Forms heteromeric channels with GJB4. Interacts with CNST.

The protein resides in the cell membrane. It localises to the cell junction. The protein localises to the gap junction. Functionally, structural component of gap junctions. Gap junctions are dodecameric channels that connect the cytoplasm of adjoining cells. They are formed by the docking of two hexameric hemichannels, one from each cell membrane. Small molecules and ions diffuse from one cell to a neighboring cell via the central pore. In Pongo pygmaeus (Bornean orangutan), this protein is Gap junction beta-2 protein (GJB2).